We begin with the raw amino-acid sequence, 97 residues long: Protein C4 (97 aa).

2 disordered regions span residues 1 to 31 (MGLL…PHTG) and 75 to 97 (ANLP…PSIY). G2 carries N-myristoyl glycine; by host lipidation. The segment covering 77–88 (LPTTHMPRQSIQ) has biased composition (polar residues).

It belongs to the geminiviridae protein AC4/C4 family.

The protein resides in the host cell membrane. Its function is as follows. Pathogenicity determinant. May act as a suppressor of RNA-mediated gene silencing, also known as post-transcriptional gene silencing (PTGS), a mechanism of plant viral defense that limits the accumulation of viral RNAs. The polypeptide is Protein C4 (Tomato yellow leaf curl China virus (TYLCCNV)).